The following is a 642-amino-acid chain: Sodium-dependent phosphate transport protein 2A (642 aa).

Over 1-106 (MISYGEQLSS…LRRTAMTLLK (106 aa)) the chain is Cytoplasmic. 2 positions are modified to phosphoserine: serine 14 and serine 37. A helical transmembrane segment spans residues 107–128 (LPLMVTFLYLFVCSLDVLSSAF). Over 129–148 (QLAGGKVAGDIFKDNAILAN) the chain is Extracellular. The chain crosses the membrane as a helical span at residues 149 to 166 (PVAGLVVGILVTVLVQSS). The Cytoplasmic portion of the chain corresponds to 167-168 (ST). Residues 169–188 (ATSIIVSMVSSGLLEVSSAI) form a helical membrane-spanning segment. The Extracellular portion of the chain corresponds to 189 to 350 (PIIMGSNIGT…HIFVDTQLPD (162 aa)). Disulfide bonds link cysteine 228/cysteine 525 and cysteine 309/cysteine 339. Asparagine 301, asparagine 326, and asparagine 333 each carry an N-linked (GlcNAc...) asparagine glycan. A helical transmembrane segment spans residues 351–373 (LAVGLILLAGSLVLLCTCLILLV). Residues 374–415 (KMLNSLLKGQVAKVIQKVINTDLPAPFTWVTGYFAMVVGAAM) are Cytoplasmic-facing. A helical membrane pass occupies residues 416–439 (TFIVQSSSVFTSAITPLVGLGVIS). The Extracellular portion of the chain corresponds to 440–469 (IERAYPLTLGSNIGTTTTAILAALASPREK). Residues 470–490 (LSSSFQIALCHFFFNISGILL) traverse the membrane as a helical segment. Residues 491 to 516 (WYPLPCTRLPIRMAKALGKRTAKYRW) are Cytoplasmic-facing. Threonine 511 carries the phosphothreonine; by PKC modification. Residues 517-537 (FAVLYLLVCFLLLPSLVFGIS) form a helical membrane-spanning segment. Topologically, residues 538-542 (MAGWR) are extracellular. Residues 543 to 564 (AMVGVGAPFGALLAFVVLINVL) traverse the membrane as a helical segment. Residues 565–642 (QSRSPGRLPK…LPAHHNATRL (78 aa)) lie on the Cytoplasmic side of the membrane. Serine 610 is subject to Phosphoserine. Phosphothreonine is present on threonine 626. Serine 628 bears the Phosphoserine mark.

Belongs to the SLC34A transporter family. As to quaternary structure, interacts via its C-terminal region with NHERF4. Interacts with NHERF1. Interacts with TMEM174; regulates SLC34A1 internalization by PTH and FGF23. As to expression, expressed in the kidney cortex.

The protein resides in the apical cell membrane. It localises to the cell membrane. The catalysed reaction is 3 Na(+)(out) + phosphate(out) = 3 Na(+)(in) + phosphate(in). Its activity is regulated as follows. Transport activity is significantly increased in response to dietary phosphate deprivation. Functionally, involved in actively transporting phosphate into cells via Na(+) cotransport in the renal brush border membrane. The cotransport has a Na(+):Pi stoichiometry of 3:1 and is electrogenic. This is Sodium-dependent phosphate transport protein 2A from Oryctolagus cuniculus (Rabbit).